The following is a 352-amino-acid chain: Protein-glutamate methylesterase/protein-glutamine glutaminase 2 (352 aa).

The region spanning 1 to 116 is the Response regulatory domain; that stretch reads MVVDDSAVVR…KQFLTDSADE (116 aa). At Asp-50 the chain carries 4-aspartylphosphate. The region spanning 162 to 352 is the CheB-type methylesterase domain; it reads AQTTERIVAI…MAREIVTQLQ (191 aa). Residues Ser-174, His-200, and Asp-296 contribute to the active site.

It belongs to the CheB family. In terms of processing, phosphorylated by CheA. Phosphorylation of the N-terminal regulatory domain activates the methylesterase activity.

The protein localises to the cytoplasm. It catalyses the reaction [protein]-L-glutamate 5-O-methyl ester + H2O = L-glutamyl-[protein] + methanol + H(+). The catalysed reaction is L-glutaminyl-[protein] + H2O = L-glutamyl-[protein] + NH4(+). Involved in chemotaxis. Part of a chemotaxis signal transduction system that modulates chemotaxis in response to various stimuli. Catalyzes the demethylation of specific methylglutamate residues introduced into the chemoreceptors (methyl-accepting chemotaxis proteins or MCP) by CheR. Also mediates the irreversible deamidation of specific glutamine residues to glutamic acid. This Xanthomonas axonopodis pv. citri (strain 306) protein is Protein-glutamate methylesterase/protein-glutamine glutaminase 2.